A 201-amino-acid chain; its full sequence is Protein LIGHT-DEPENDENT SHORT HYPOCOTYLS 2 (201 aa).

A compositionally biased stretch (polar residues) spans 1 to 14 (MDLISQNHNNRNPN). 2 disordered regions span residues 1-37 (MDLISQNHNNRNPNTSLSTQTPSSFSSPPSSSRYENQ) and 151-201 (SRGV…GATQ). Over residues 15-32 (TSLSTQTPSSFSSPPSSS) the composition is skewed to low complexity. The 128-residue stretch at 33-160 (RYENQKRRDW…SRGVSYEKKR (128 aa)) folds into the ALOG domain. The Nuclear localization signal signature appears at 158-162 (KKRKR).

Belongs to the plant homeotic and developmental regulators ALOG protein family.

It is found in the nucleus. Functionally, probable transcription regulator that acts as a developmental regulator by promoting cell growth in response to light. This chain is Protein LIGHT-DEPENDENT SHORT HYPOCOTYLS 2 (LSH2), found in Arabidopsis thaliana (Mouse-ear cress).